A 68-amino-acid polypeptide reads, in one-letter code: Coiled-coil domain-containing protein 179 (68 aa).

Positions 11–68 (SQVNPEGPRQHHPSEVTERQLANKRIQNMQHLKKEKRRLNKRFSRPSPIPEPGLLWSS) are disordered. The segment covering 18 to 28 (PRQHHPSEVTE) has biased composition (basic and acidic residues). Residues 27-53 (TERQLANKRIQNMQHLKKEKRRLNKRF) are a coiled coil. Basic residues predominate over residues 41 to 54 (HLKKEKRRLNKRFS).

The polypeptide is Coiled-coil domain-containing protein 179 (CCDC179) (Homo sapiens (Human)).